The primary structure comprises 626 residues: uncharacterized protein (626 aa).

This is an uncharacterized protein from Dictyostelium discoideum (Social amoeba).